The sequence spans 147 residues: Nucleoside diphosphate kinase (147 aa).

Residues Lys11, Phe59, Arg87, Thr93, Arg104, and Asn114 each coordinate ATP. The Pros-phosphohistidine intermediate role is filled by His117.

Belongs to the NDK family. Mg(2+) serves as cofactor.

The protein resides in the cytoplasm. The enzyme catalyses a 2'-deoxyribonucleoside 5'-diphosphate + ATP = a 2'-deoxyribonucleoside 5'-triphosphate + ADP. The catalysed reaction is a ribonucleoside 5'-diphosphate + ATP = a ribonucleoside 5'-triphosphate + ADP. Major role in the synthesis of nucleoside triphosphates other than ATP. The ATP gamma phosphate is transferred to the NDP beta phosphate via a ping-pong mechanism, using a phosphorylated active-site intermediate. The chain is Nucleoside diphosphate kinase from Sulfurisphaera tokodaii (strain DSM 16993 / JCM 10545 / NBRC 100140 / 7) (Sulfolobus tokodaii).